A 187-amino-acid chain; its full sequence is dTTP/UTP pyrophosphatase (187 aa).

Asp72 acts as the Proton acceptor in catalysis.

It belongs to the Maf family. YhdE subfamily. The cofactor is a divalent metal cation.

It is found in the cytoplasm. It carries out the reaction dTTP + H2O = dTMP + diphosphate + H(+). It catalyses the reaction UTP + H2O = UMP + diphosphate + H(+). Nucleoside triphosphate pyrophosphatase that hydrolyzes dTTP and UTP. May have a dual role in cell division arrest and in preventing the incorporation of modified nucleotides into cellular nucleic acids. This Vibrio cholerae serotype O1 (strain ATCC 39315 / El Tor Inaba N16961) protein is dTTP/UTP pyrophosphatase.